The following is a 452-amino-acid chain: Acetyl-CoA decarbonylase/synthase complex subunit delta (452 aa).

It belongs to the CdhD family. Heterodimer of delta and gamma chains. The ACDS complex is made up of alpha, epsilon, beta, gamma and delta chains with a probable stoichiometry of (alpha(2)epsilon(2))(4)-beta(8)-(gamma(1)delta(1))(8).

Functionally, part of a complex that catalyzes the reversible cleavage of acetyl-CoA, allowing autotrophic growth from CO(2). Probably maintains the overall quaternary structure of the ACDS complex. This is Acetyl-CoA decarbonylase/synthase complex subunit delta from Archaeoglobus fulgidus (strain ATCC 49558 / DSM 4304 / JCM 9628 / NBRC 100126 / VC-16).